The sequence spans 421 residues: NADH-quinone oxidoreductase subunit F (421 aa).

Residues 1–25 are disordered; sequence MLKEEDKIFTNLHGQQSHDLKSSKK. Residues 16–25 are compositionally biased toward basic and acidic residues; the sequence is QSHDLKSSKK. Residue 54–63 coordinates NAD(+); the sequence is GRGGAGFSTG. 166-213 lines the FMN pocket; it reads GAGAYICGEETALLESLEGKKGMPRLKPPFPAGFGLYGCPTTINNVES. Residues cysteine 344, cysteine 347, cysteine 350, and cysteine 390 each contribute to the [4Fe-4S] cluster site.

It belongs to the complex I 51 kDa subunit family. FMN serves as cofactor. The cofactor is [4Fe-4S] cluster.

The catalysed reaction is a quinone + NADH + 5 H(+)(in) = a quinol + NAD(+) + 4 H(+)(out). Functionally, NDH-1 shuttles electrons from NADH, via FMN and iron-sulfur (Fe-S) centers, to quinones in the respiratory chain. Couples the redox reaction to proton translocation (for every two electrons transferred, four hydrogen ions are translocated across the cytoplasmic membrane), and thus conserves the redox energy in a proton gradient. This chain is NADH-quinone oxidoreductase subunit F (nuoF), found in Rickettsia massiliae (strain Mtu5).